A 60-amino-acid chain; its full sequence is Colanic acid capsular biosynthesis activation protein B (60 aa).

This is Colanic acid capsular biosynthesis activation protein B (rcsB) from Klebsiella aerogenes (Enterobacter aerogenes).